The chain runs to 209 residues: Large ribosomal subunit protein uL3 (209 aa).

Q150 is modified (N5-methylglutamine).

The protein belongs to the universal ribosomal protein uL3 family. As to quaternary structure, part of the 50S ribosomal subunit. Forms a cluster with proteins L14 and L19. Methylated by PrmB.

Its function is as follows. One of the primary rRNA binding proteins, it binds directly near the 3'-end of the 23S rRNA, where it nucleates assembly of the 50S subunit. In Salmonella paratyphi C (strain RKS4594), this protein is Large ribosomal subunit protein uL3.